The sequence spans 102 residues: Membrane-bound protein LytA (102 aa).

A signal peptide spans 1–16 (MKKFIALLFFILLLSG). Cysteine 17 is lipidated: N-palmitoyl cysteine. Cysteine 17 is lipidated: S-diacylglycerol cysteine.

Its subcellular location is the cell membrane. In terms of biological role, possible role in the secretion of LytB and LytC. In Bacillus subtilis (strain 168), this protein is Membrane-bound protein LytA (lytA).